Consider the following 230-residue polypeptide: MALVLDAEVVLLDIEGTIASQSFVLDVLFGYSRARMADFVAARRGDPEIEAILADVAARAGGTDPVAALLAWQDADQKIPPLKKLQGRIWESGYKEGAYVSHIYDDALIALRRFKAAGLPLYIFSSGSVQAQIQYFQFSSAGDLRSLFDGHFDTDIGAKVEAASYQAIADTIGARPSRIVFFSDNPRELEAAAAAGIVVVHVVKGNTPSDPRFPEITDFSTVELRHSKTE.

The protein belongs to the HAD-like hydrolase superfamily. MasA/MtnC family. As to quaternary structure, monomer. The cofactor is Mg(2+).

It carries out the reaction 5-methylsulfanyl-2,3-dioxopentyl phosphate + H2O = 1,2-dihydroxy-5-(methylsulfanyl)pent-1-en-3-one + phosphate. Its pathway is amino-acid biosynthesis; L-methionine biosynthesis via salvage pathway; L-methionine from S-methyl-5-thio-alpha-D-ribose 1-phosphate: step 3/6. The protein operates within amino-acid biosynthesis; L-methionine biosynthesis via salvage pathway; L-methionine from S-methyl-5-thio-alpha-D-ribose 1-phosphate: step 4/6. Bifunctional enzyme that catalyzes the enolization of 2,3-diketo-5-methylthiopentyl-1-phosphate (DK-MTP-1-P) into the intermediate 2-hydroxy-3-keto-5-methylthiopentenyl-1-phosphate (HK-MTPenyl-1-P), which is then dephosphorylated to form the acireductone 1,2-dihydroxy-3-keto-5-methylthiopentene (DHK-MTPene). This chain is Enolase-phosphatase E1, found in Bradyrhizobium sp. (strain BTAi1 / ATCC BAA-1182).